Consider the following 126-residue polypeptide: C2H2-type zinc-finger transcription factor M5 (126 aa).

Disordered regions lie at residues alanine 17 to arginine 52 and glutamate 103 to aspartate 126. Polar residues predominate over residues serine 38 to aspartate 48. The segment at asparagine 51–asparagine 76 adopts a C2H2-type 1; degenerate zinc-finger fold. Residues phenylalanine 83 to asparagine 115 form a C2H2-type 2; degenerate zinc finger. Positions asparagine 115–aspartate 126 are enriched in basic and acidic residues.

This sequence belongs to the GLI C2H2-type zinc-finger protein family.

The protein localises to the nucleus. In terms of biological role, transcription factor that probably regulates the expression of the gene cluster that mediates the biosynthesis of squalestatin S1 (SQS1, also known as zaragozic acid A), a heavily oxidized fungal polyketide that offers potent cholesterol lowering activity by targeting squalene synthase (SS). The polypeptide is C2H2-type zinc-finger transcription factor M5 (Phoma sp. (strain ATCC 20986 / MF5453)).